The following is a 352-amino-acid chain: UDP-N-acetylglucosamine--N-acetylmuramyl-(pentapeptide) pyrophosphoryl-undecaprenol N-acetylglucosamine transferase (352 aa).

UDP-N-acetyl-alpha-D-glucosamine-binding residues include serine 195 and glutamine 287.

This sequence belongs to the glycosyltransferase 28 family. MurG subfamily.

It localises to the cell membrane. It carries out the reaction Mur2Ac(oyl-L-Ala-gamma-D-Glu-L-Lys-D-Ala-D-Ala)-di-trans,octa-cis-undecaprenyl diphosphate + UDP-N-acetyl-alpha-D-glucosamine = beta-D-GlcNAc-(1-&gt;4)-Mur2Ac(oyl-L-Ala-gamma-D-Glu-L-Lys-D-Ala-D-Ala)-di-trans,octa-cis-undecaprenyl diphosphate + UDP + H(+). The protein operates within cell wall biogenesis; peptidoglycan biosynthesis. Its function is as follows. Cell wall formation. Catalyzes the transfer of a GlcNAc subunit on undecaprenyl-pyrophosphoryl-MurNAc-pentapeptide (lipid intermediate I) to form undecaprenyl-pyrophosphoryl-MurNAc-(pentapeptide)GlcNAc (lipid intermediate II). This Streptococcus pneumoniae (strain ATCC BAA-255 / R6) protein is UDP-N-acetylglucosamine--N-acetylmuramyl-(pentapeptide) pyrophosphoryl-undecaprenol N-acetylglucosamine transferase.